The primary structure comprises 428 residues: Histidine--tRNA ligase (428 aa).

Belongs to the class-II aminoacyl-tRNA synthetase family. In terms of assembly, homodimer.

It is found in the cytoplasm. It catalyses the reaction tRNA(His) + L-histidine + ATP = L-histidyl-tRNA(His) + AMP + diphosphate + H(+). The protein is Histidine--tRNA ligase of Mesomycoplasma hyopneumoniae (strain J / ATCC 25934 / NCTC 10110) (Mycoplasma hyopneumoniae).